The primary structure comprises 396 residues: Putative cystathionine beta-lyase (396 aa).

Residue lysine 210 is modified to N6-(pyridoxal phosphate)lysine.

This sequence belongs to the trans-sulfuration enzymes family. Requires pyridoxal 5'-phosphate as cofactor.

The enzyme catalyses L,L-cystathionine + H2O = L-homocysteine + pyruvate + NH4(+). It catalyses the reaction an S-substituted L-cysteine + H2O = a thiol + pyruvate + NH4(+). The protein operates within amino-acid biosynthesis; L-methionine biosynthesis via de novo pathway; L-homocysteine from L-cystathionine: step 1/1. Its function is as follows. Catalyzes the cleavage of cystathionine to homocysteine, pyruvate and ammonia during methionine biosynthesis. This is Putative cystathionine beta-lyase (metC) from Rhizobium johnstonii (strain DSM 114642 / LMG 32736 / 3841) (Rhizobium leguminosarum bv. viciae).